We begin with the raw amino-acid sequence, 313 residues long: Ribosomal RNA small subunit methyltransferase H (313 aa).

Residues 33–35 (AGH), aspartate 53, phenylalanine 82, aspartate 103, and glutamine 110 each bind S-adenosyl-L-methionine.

It belongs to the methyltransferase superfamily. RsmH family.

The protein resides in the cytoplasm. It catalyses the reaction cytidine(1402) in 16S rRNA + S-adenosyl-L-methionine = N(4)-methylcytidine(1402) in 16S rRNA + S-adenosyl-L-homocysteine + H(+). Specifically methylates the N4 position of cytidine in position 1402 (C1402) of 16S rRNA. The protein is Ribosomal RNA small subunit methyltransferase H of Acetivibrio thermocellus (strain ATCC 27405 / DSM 1237 / JCM 9322 / NBRC 103400 / NCIMB 10682 / NRRL B-4536 / VPI 7372) (Clostridium thermocellum).